Reading from the N-terminus, the 59-residue chain is Inner kinetochore subunit fta6 (59 aa).

In terms of assembly, component of the inner kinetochore constitutive centromere-associated network (CCAN) (also known as central kinetochore Sim4 complex in fission yeast), which is composed of at least cnl2, cnp3, cnp20, fta1, fta2, fta3, fta4, fta6, fta7, mal2, mhf1, mhf2, mis6, mis15, mis17, sim4 and wip1.

The protein localises to the nucleus. Its subcellular location is the chromosome. It is found in the centromere. The protein resides in the kinetochore. It localises to the cytoplasm. The protein localises to the cytoskeleton. Its subcellular location is the microtubule organizing center. It is found in the spindle pole body. Component of the kinetochore, a multiprotein complex that assembles on centromeric DNA and attaches chromosomes to spindle microtubules, mediating chromosome segregation and sister chromatid segregation during meiosis and mitosis. Component of the inner kinetochore constitutive centromere-associated network (CCAN), which serves as a structural platform for outer kinetochore assembly. The sequence is that of Inner kinetochore subunit fta6 (fta6) from Schizosaccharomyces pombe (strain 972 / ATCC 24843) (Fission yeast).